The chain runs to 447 residues: Phosphoglucosamine mutase (447 aa).

Ser102 serves as the catalytic Phosphoserine intermediate. Ser102, Asp241, Asp243, and Asp245 together coordinate Mg(2+). Ser102 carries the post-translational modification Phosphoserine.

Belongs to the phosphohexose mutase family. Mg(2+) serves as cofactor. Post-translationally, activated by phosphorylation.

It catalyses the reaction alpha-D-glucosamine 1-phosphate = D-glucosamine 6-phosphate. In terms of biological role, catalyzes the conversion of glucosamine-6-phosphate to glucosamine-1-phosphate. The polypeptide is Phosphoglucosamine mutase (Symbiobacterium thermophilum (strain DSM 24528 / JCM 14929 / IAM 14863 / T)).